The following is a 2131-amino-acid chain: Sodium channel protein para (2131 aa).

Residues 1–148 (MTEDSDSISE…FNPIRRVAIY (148 aa)) lie on the Cytoplasmic side of the membrane. Over residues 35–48 (HEKQKELERKRAEG) the composition is skewed to basic and acidic residues. A disordered region spans residues 35–84 (HEKQKELERKRAEGEVPQYGRKKKQKEIRYDDEDEDEGPQPDPTLEQGVP). Positions 64-73 (YDDEDEDEGP) are enriched in acidic residues. The I repeat unit spans residues 134–467 (WMLDPFNPIR…AAKAAKLEER (334 aa)). Residues 149 to 172 (ILVHPLFSLFIITTILVNCILMIM) traverse the membrane as a helical segment. The Extracellular portion of the chain corresponds to 173–180 (PTTPTVES). The chain crosses the membrane as a helical span at residues 181–199 (TEVIFTGIYTFESAVKVMA). Residues 200–212 (RGFILCPFTYLRD) are Cytoplasmic-facing. A helical transmembrane segment spans residues 213 to 231 (AWNWLDFVVIALAYVTMGI). The Extracellular segment spans residues 232-237 (DLGNLA). Residues 238–257 (ALRTFRVLRALKTVAIVPGL) traverse the membrane as a helical; Voltage-sensor segment. At 258 to 273 (KTIVGAVIESVKNLRD) the chain is on the cytoplasmic side. Residues 274–297 (VIILTMFSLSVFALMGLQIYMGVL) form a helical membrane-spanning segment. At 298 to 373 (TQKCIKKFPL…PNYGYTSFDS (76 aa)) the chain is on the extracellular side. A disulfide bridge connects residues Cys301 and Cys350. Asn313, Asn325, and Asn343 each carry an N-linked (GlcNAc...) asparagine glycan. Residues 374-398 (FGWAFLSAFRLMTQDFWEDLYQLVL) constitute an intramembrane region (pore-forming). Topologically, residues 399-405 (RAAGPWH) are extracellular. A helical membrane pass occupies residues 406 to 427 (MLFFIVIIFLGSFYLVNLILAI). The Cytoplasmic segment spans residues 428–812 (VAMSYDELQK…VWLKFQEWVS (385 aa)). Phosphoserine; by PKA is present on residues Ser553 and Ser570. Disordered stretches follow at residues 553–572 (STTS…GSRS) and 671–691 (KESK…TNGG). Over residues 680 to 691 (TRNQSVGATNGG) the composition is skewed to polar residues. The stretch at 799-1069 (DCCWVWLKFQ…IAEAFNRIGR (271 aa)) is one II repeat. A helical transmembrane segment spans residues 813-837 (LIVFDPFVELFITLCIVVNTMFMAM). The Extracellular segment spans residues 838–848 (DHHDMNKEMER). Residues 849–873 (VLKSGNYFFTATFAIEATMKLMAMS) traverse the membrane as a helical segment. Over 874 to 880 (PKYYFQE) the chain is Cytoplasmic. The helical transmembrane segment at 881-900 (GWNIFDFIIVALSLLELGLE) threads the bilayer. The Extracellular portion of the chain corresponds to 901–906 (GVQGLS). The helical; Voltage-sensor transmembrane segment at 907–926 (VLRSFRLLRVFKLAKSWPTL) threads the bilayer. Residues 927-941 (NLLISIMGRTMGALG) lie on the Cytoplasmic side of the membrane. The chain crosses the membrane as a helical span at residues 942–963 (NLTFVLCIIIFIFAVMGMQLFG). Topologically, residues 964–985 (KNYHDHKDRFPDGDLPRWNFTD) are extracellular. N-linked (GlcNAc...) asparagine glycosylation occurs at Asn982. Positions 986–1006 (FMHSFMIVFRVLCGEWIESMW) form an intramembrane region, pore-forming. The Extracellular portion of the chain corresponds to 1007 to 1013 (DCMYVGD). A disulfide bridge links Cys1008 with Cys1016. The chain crosses the membrane as a helical span at residues 1014-1041 (VSCIPFFLATVVIGNLVVLNLFLALLLS). Residues 1042–1296 (NFGSSSLSAP…WGNLRLKTFQ (255 aa)) are Cytoplasmic-facing. Residues 1166-1240 (DMKNNKPKKS…LDEEGECEEG (75 aa)) are disordered. Polar residues predominate over residues 1177 to 1194 (YLNNATDDDTASINSYGS). Over residues 1199–1225 (PFKDESHKGSAETMEGEEKRDASKEDL) the composition is skewed to basic and acidic residues. Positions 1226–1240 (GLDEELDEEGECEEG) are enriched in acidic residues. Residues 1284-1591 (WQGWGNLRLK…QKKYYNAMKK (308 aa)) form an III repeat. The helical transmembrane segment at 1297–1320 (LIENKYFETAVITMILMSSLALAL) threads the bilayer. At 1321-1334 (EDVHLPQRPILQDI) the chain is on the extracellular side. Residues 1335–1359 (LYYMDRIFTVIFFLEMLIKWLALGF) traverse the membrane as a helical segment. Residues 1360-1365 (KVYFTN) are Cytoplasmic-facing. A helical transmembrane segment spans residues 1366–1387 (AWCWLDFVIVMVSLINFVASLV). The Extracellular segment spans residues 1388–1391 (GAGG). Residues 1392–1413 (IQAFKTMRTLRALRPLRAMSRM) traverse the membrane as a helical; Voltage-sensor segment. Residues 1414–1432 (QGMRVVVNALVQAIPSIFN) lie on the Cytoplasmic side of the membrane. Residues 1433 to 1454 (VLLVCLIFWLIFAIMGVQLFAG) traverse the membrane as a helical segment. The Extracellular segment spans residues 1455–1495 (KYFKCEDMNGTKLSHEIIPNRNACESENYTWVNSAMNFDHV). N-linked (GlcNAc...) asparagine glycosylation is found at Asn1463 and Asn1482. Residues 1496-1517 (GNAYLCLFQVATFKGWIQIMND) constitute an intramembrane region (pore-forming). The Extracellular segment spans residues 1518–1533 (AIDSREVDKQPIRETN). The helical transmembrane segment at 1534–1560 (IYMYLYFVFFIIFGSFFTLNLFIGVII) threads the bilayer. At 1561-1614 (DNFNEQKKKAGGSLEMFMTEDQKKYYNAMKKMGSKKPLKAIPRPRWRPQAIVFE) the chain is on the cytoplasmic side. The stretch at 1601 to 1862 (IPRPRWRPQA…NMYIAVILEN (262 aa)) is one IV repeat. The helical transmembrane segment at 1615-1638 (IVTDKKFDIIIMLFIGLNMFTMTL) threads the bilayer. Over 1639-1649 (DRYDASDTYNA) the chain is Extracellular. The chain crosses the membrane as a helical span at residues 1650 to 1673 (VLDYLNAIFVVIFSSECLLKIFAL). Over 1674 to 1679 (RYHYFI) the chain is Cytoplasmic. The helical transmembrane segment at 1680-1703 (EPWNLFDVVVVILSILGLVLSDII) threads the bilayer. Residues 1704–1713 (EKYFVSPTLL) are Extracellular-facing. Residues 1714–1735 (RVVRVAKVGRVLRLVKGAKGIR) traverse the membrane as a helical; Voltage-sensor segment. Over 1736-1750 (TLLFALAMSLPALFN) the chain is Cytoplasmic. The helical transmembrane segment at 1751-1773 (ICLLLFLVMFIFAIFGMSFFMHV) threads the bilayer. Residues 1774 to 1787 (KEKSGINDVYNFKT) are Extracellular-facing. The segment at residues 1788-1810 (FGQSMILLFQMSTSAGWDGVLDA) is an intramembrane region (pore-forming). The Extracellular segment spans residues 1811-1835 (IINEEACDPPDNDKGYPGNCGSATV). Residues 1836–1860 (GITFLLSYLVISFLIVINMYIAVIL) traverse the membrane as a helical segment. Topologically, residues 1861–2131 (ENYSQATEDV…PSITSRTADV (271 aa)) are cytoplasmic. In terms of domain architecture, EF-hand spans 1877 to 1912 (DDYDMYYEIWQQFDPEGTQYIRYDQLSEFLDVLEPP). The disordered stretch occupies residues 2001-2096 (HKARGEGGGS…GSPGAGSAGR (96 aa)). Over residues 2021 to 2035 (GDPDAGDPAPDEATD) the composition is skewed to acidic residues. Residues 2068–2088 (AAAAAAAAAAAAAAGTTTAGS) show a composition bias toward low complexity.

This sequence belongs to the sodium channel (TC 1.A.1.10) family. Para subfamily.

It is found in the cell membrane. Its function is as follows. Mediates the voltage-dependent sodium ion permeability of excitable membranes. Assuming opened or closed conformations in response to the voltage difference across the membrane, the protein forms a sodium-selective channel through which Na(+) ions may pass in accordance with their electrochemical gradient. In Drosophila melanogaster (Fruit fly), this protein is Sodium channel protein para (para).